The primary structure comprises 120 residues: Large ribosomal subunit protein uL18 (120 aa).

It belongs to the universal ribosomal protein uL18 family. Part of the 50S ribosomal subunit; part of the 5S rRNA/L5/L18/L25 subcomplex. Contacts the 5S and 23S rRNAs.

In terms of biological role, this is one of the proteins that bind and probably mediate the attachment of the 5S RNA into the large ribosomal subunit, where it forms part of the central protuberance. The sequence is that of Large ribosomal subunit protein uL18 from Azorhizobium caulinodans (strain ATCC 43989 / DSM 5975 / JCM 20966 / LMG 6465 / NBRC 14845 / NCIMB 13405 / ORS 571).